A 275-amino-acid polypeptide reads, in one-letter code: Calcium-binding protein 4 (275 aa).

Positions Met1–Pro12 are enriched in polar residues. Residues Met1–Tyr112 are disordered. Residues Thr38–Thr55 are compositionally biased toward basic residues. The residue at position 42 (Ser42) is a Phosphoserine. 4 consecutive EF-hand domains span residues Glu129–Met164, Gly183–Glu200, Leu206–Glu241, and Leu243–His275. Positions 142, 144, 146, 148, and 153 each coordinate Ca(2+). 10 residues coordinate Ca(2+): Asp219, Asp221, Asp223, Arg225, Glu230, Asp256, Asn258, Asp260, Thr262, and Glu267.

As to quaternary structure, interacts with CACNA1F and CACNA1D (via IQ domain) in a calcium independent manner. Interacts (via N-terminus) with UNC119. In terms of processing, phosphorylated. Phosphorylation levels change with the light conditions and regulate the activity. As to expression, expressed in retina and in the inner hair cells (IHC) of the cochlea.

The protein localises to the cytoplasm. The protein resides in the presynapse. Involved in normal synaptic function through regulation of Ca(2+) influx and neurotransmitter release in photoreceptor synaptic terminals and in auditory transmission. Modulator of CACNA1D and CACNA1F, suppressing the calcium-dependent inactivation and shifting the activation range to more hyperpolarized voltages. The polypeptide is Calcium-binding protein 4 (CABP4) (Homo sapiens (Human)).